Here is a 136-residue protein sequence, read N- to C-terminus: Methylglyoxal synthase (136 aa).

The MGS-like domain maps to 1 to 136; it reads MKIALIAHDR…REVVREENEA (136 aa). Residues histidine 8, lysine 12, 34-37, and 54-55 each bind substrate; these read TGTT and SG. Aspartate 60 acts as the Proton donor/acceptor in catalysis. Histidine 87 is a binding site for substrate.

Belongs to the methylglyoxal synthase family.

The catalysed reaction is dihydroxyacetone phosphate = methylglyoxal + phosphate. Its function is as follows. Catalyzes the formation of methylglyoxal from dihydroxyacetone phosphate. This is Methylglyoxal synthase from Brevibacillus brevis (strain 47 / JCM 6285 / NBRC 100599).